The following is a 151-amino-acid chain: Group 10 secretory phospholipase A2 (151 aa).

Positions 1 to 17 (MLLLLLLLLLGPGSCLS) are cleaved as a signal peptide. A propeptide spanning residues 18-28 (EATRRSHVYKR) is cleaved from the precursor. 8 disulfides stabilise this stretch: Cys-39-Cys-97, Cys-53-Cys-143, Cys-55-Cys-71, Cys-70-Cys-125, Cys-76-Cys-150, Cys-77-Cys-118, Cys-86-Cys-111, and Cys-104-Cys-116. 3 residues coordinate Ca(2+): Tyr-54, Gly-56, and Gly-58. His-74 is a catalytic residue. Residue Asp-75 coordinates Ca(2+). The active site involves Asp-119.

This sequence belongs to the phospholipase A2 family. In terms of assembly, interacts with PLA2R1; this interaction mediates PLA2G10 clearance and inactivation. Requires Ca(2+) as cofactor.

It is found in the secreted. The protein localises to the lysosome. The protein resides in the cytoplasmic vesicle. It localises to the secretory vesicle. Its subcellular location is the acrosome. The catalysed reaction is a 1,2-diacyl-sn-glycero-3-phosphocholine + H2O = a 1-acyl-sn-glycero-3-phosphocholine + a fatty acid + H(+). It catalyses the reaction 1-hexadecanoyl-2-(9Z-octadecenoyl)-sn-glycero-3-phosphocholine + H2O = 1-hexadecanoyl-sn-glycero-3-phosphocholine + (9Z)-octadecenoate + H(+). The enzyme catalyses 1-octadecanoyl-2-(5Z,8Z,11Z,14Z-eicosatetraenoyl)-sn-glycero-3-phosphocholine + H2O = 1-octadecanoyl-sn-glycero-3-phosphocholine + (5Z,8Z,11Z,14Z)-eicosatetraenoate + H(+). It carries out the reaction 1,2-dihexadecanoyl-sn-glycero-3-phosphocholine + H2O = 1-hexadecanoyl-sn-glycero-3-phosphocholine + hexadecanoate + H(+). The catalysed reaction is 1-hexadecanoyl-2-(9Z-octadecenoyl)-sn-glycero-3-phosphoglycerol + H2O = 1-hexadecanoyl-sn-glycero-3-phosphoglycerol + (9Z)-octadecenoate + H(+). It catalyses the reaction 1,2-dihexadecanoyl-sn-glycero-3-phospho-(1'-sn-glycerol) + H2O = 1-hexadecanoyl-sn-glycero-3-phospho-(1'-sn-glycerol) + hexadecanoate + H(+). The enzyme catalyses 1-hexadecanoyl-2-(9Z-octadecenoyl)-sn-glycero-3-phospho-L-serine + H2O = 1-hexadecanoyl-sn-glycero-3-phospho-L-serine + (9Z)-octadecenoate + H(+). It carries out the reaction 1-hexadecanoyl-2-(9Z,12Z-octadecadienoyl)-sn-glycero-3-phosphoethanolamine + H2O = 1-hexadecanoyl-sn-glycero-3-phosphoethanolamine + (9Z,12Z)-octadecadienoate + H(+). The catalysed reaction is 1-hexadecanoyl-2-(9Z-octadecenoyl)-sn-glycero-3-phosphate + H2O = 1-hexadecanoyl-sn-glycero-3-phosphate + (9Z)-octadecenoate + H(+). It catalyses the reaction 1-O-hexadecyl-2-acetyl-sn-glycero-3-phosphocholine + H2O = 1-O-hexadecyl-sn-glycero-3-phosphocholine + acetate + H(+). Functionally, secretory calcium-dependent phospholipase A2 that primarily targets extracellular phospholipids. Hydrolyzes the ester bond of the fatty acyl group attached at sn-2 position of phospholipids with preference for phosphatidylcholines and phosphatidylglycerols over phosphatidylethanolamines. Preferentially releases sn-2 omega-6 and omega-3 polyunsaturated fatty acyl (PUFA) chains over saturated fatty acyls. Contributes to phospholipid remodeling of very low-density lipoprotein (VLDL), low-density lipoprotein (LDL) and high-density lipoprotein (HDL) particles. Hydrolyzes LDL phospholipids releasing unsaturated fatty acids that regulate macrophage differentiation toward foam cells. Efficiently hydrolyzes and inactivates platelet activating factor (PAF), a potent lipid mediator present in oxidized LDL. May act in an autocrine and paracrine manner. Secreted by lung epithelium, targets membrane phospholipids of infiltrating eosinophils, releasing arachidonate and boosting eicosanoid and cysteinyl leukotriene synthesis involved in airway inflammatory response. Secreted by gut epithelium, hydrolyzes dietary and biliary phosphatidylcholines in the gastrointestinal lumen. Plays a stem cell regulator role in colon epithelium. Within intracellular compartment, mediates Paneth-like cell differentiation and its stem cell supporting functions by inhibiting the Wnt signaling pathway in intestinal stem cell (ISC). Secreted in the intestinal lumen upon inflammation, acts in an autocrine way and promotes prostaglandin E2 synthesis that stimulates Wnt signaling pathway in ISCs and tissue regeneration. May participate in hair follicle morphogenesis by regulating phosphatidylethanolamines metabolism at the outermost epithelial layer and facilitating melanin synthesis. By releasing lysophosphatidylcholines (LPCs) at sperm acrosome, controls sperm cell capacitation, acrosome reaction and overall fertility. May promote neurite outgrowth in neuron fibers involved in nociception. Contributes to lipid remodeling of cellular membranes and generation of lipid mediators involved in pathogen clearance. Cleaves sn-2 fatty acyl chains of phosphatidylglycerols and phosphatidylethanolamines, which are major components of membrane phospholipids in bacteria. Displays bactericidal activity against Gram-positive bacteria by directly hydrolyzing phospholipids of the bacterial membrane. In pulmonary epithelium, may contribute to host defense response against adenoviral infection. Prevents adenovirus entry into host cells by hydrolyzing host cell plasma membrane, releasing C16:0 LPCs that inhibit virus-mediated membrane fusion and viral infection. Likely prevents adenoviral entry into the endosomes of host cells. May play a role in maturation and activation of innate immune cells including macrophages, group 2 innate lymphoid cells and mast cells. This Rattus norvegicus (Rat) protein is Group 10 secretory phospholipase A2 (Pla2g10).